Reading from the N-terminus, the 297-residue chain is Mycothiol acetyltransferase (297 aa).

2 consecutive N-acetyltransferase domains span residues 7–156 and 153–297; these read VFSD…VTIR and VTIR…PPPH. E38 contacts 1D-myo-inositol 2-(L-cysteinylamino)-2-deoxy-alpha-D-glucopyranoside. 79-81 provides a ligand contact to acetyl-CoA; it reads VVV. Positions 180, 219, and 227 each coordinate 1D-myo-inositol 2-(L-cysteinylamino)-2-deoxy-alpha-D-glucopyranoside. Acetyl-CoA-binding positions include 231 to 233 and 238 to 244; these read VGV and QGLGLGR. Y265 is a binding site for 1D-myo-inositol 2-(L-cysteinylamino)-2-deoxy-alpha-D-glucopyranoside. 270 to 275 provides a ligand contact to acetyl-CoA; sequence NRPALR.

It belongs to the acetyltransferase family. MshD subfamily. As to quaternary structure, monomer.

It carries out the reaction 1D-myo-inositol 2-(L-cysteinylamino)-2-deoxy-alpha-D-glucopyranoside + acetyl-CoA = mycothiol + CoA + H(+). Its function is as follows. Catalyzes the transfer of acetyl from acetyl-CoA to desacetylmycothiol (Cys-GlcN-Ins) to form mycothiol. The chain is Mycothiol acetyltransferase from Thermomonospora curvata (strain ATCC 19995 / DSM 43183 / JCM 3096 / KCTC 9072 / NBRC 15933 / NCIMB 10081 / Henssen B9).